The chain runs to 100 residues: Large ribosomal subunit protein uL23 (100 aa).

It belongs to the universal ribosomal protein uL23 family. As to quaternary structure, part of the 50S ribosomal subunit. Contacts protein L29, and trigger factor when it is bound to the ribosome.

Functionally, one of the early assembly proteins it binds 23S rRNA. One of the proteins that surrounds the polypeptide exit tunnel on the outside of the ribosome. Forms the main docking site for trigger factor binding to the ribosome. The sequence is that of Large ribosomal subunit protein uL23 from Prochlorococcus marinus (strain MIT 9312).